The following is a 223-amino-acid chain: MRGLFVTGTDTGVGKTEVACALVRAARAAGLDAVGMKPAQSGHVPGEPSDAERLREASDRVEPLEAICPYTFGAPLAPAAAARLEGREVSLARVVEAARALAARHAAVVVEGAGGLLVPLTARETHADLAAALGLPVLVVARAGLGTVNHTALTVEALERRGLAVAGIVLNRTGPEDDPSVPLNAAEIARLTYREPLALLPWEPDIARRARSLGSILGAKIQF.

T16 provides a ligand contact to Mg(2+). Residue K37 is part of the active site. S41 lines the substrate pocket. D50 and E111 together coordinate Mg(2+). ATP-binding positions include D50, 111–114 (EGAG), and 171–172 (NR).

This sequence belongs to the dethiobiotin synthetase family. In terms of assembly, homodimer. The cofactor is Mg(2+).

It localises to the cytoplasm. The enzyme catalyses (7R,8S)-7,8-diammoniononanoate + CO2 + ATP = (4R,5S)-dethiobiotin + ADP + phosphate + 3 H(+). Its pathway is cofactor biosynthesis; biotin biosynthesis; biotin from 7,8-diaminononanoate: step 1/2. Catalyzes a mechanistically unusual reaction, the ATP-dependent insertion of CO2 between the N7 and N8 nitrogen atoms of 7,8-diaminopelargonic acid (DAPA, also called 7,8-diammoniononanoate) to form a ureido ring. The sequence is that of ATP-dependent dethiobiotin synthetase BioD from Anaeromyxobacter dehalogenans (strain 2CP-1 / ATCC BAA-258).